We begin with the raw amino-acid sequence, 686 residues long: Translation initiation factor IF-2 (686 aa).

The segment at 54 to 105 (KPSVADEFEVEEKVVRSKKNSNKKKKKGKGNEDKRQENFAGRQQTQTVETPD) is disordered. The segment covering 69–81 (RSKKNSNKKKKKG) has biased composition (basic residues). In terms of domain architecture, tr-type G spans 188 to 357 (ERPAVVTIMG…LLVSEVEEYK (170 aa)). The segment at 197 to 204 (GHVDHGKT) is G1. Residue 197–204 (GHVDHGKT) participates in GTP binding. The interval 222–226 (GITQH) is G2. Positions 243 to 246 (DTPG) are G3. GTP contacts are provided by residues 243–247 (DTPGH) and 297–300 (NKMD). The tract at residues 297–300 (NKMD) is G4. Residues 333–335 (SAI) form a G5 region.

The protein belongs to the TRAFAC class translation factor GTPase superfamily. Classic translation factor GTPase family. IF-2 subfamily.

It localises to the cytoplasm. In terms of biological role, one of the essential components for the initiation of protein synthesis. Protects formylmethionyl-tRNA from spontaneous hydrolysis and promotes its binding to the 30S ribosomal subunits. Also involved in the hydrolysis of GTP during the formation of the 70S ribosomal complex. In Bacillus cereus (strain 03BB102), this protein is Translation initiation factor IF-2.